Reading from the N-terminus, the 476-residue chain is Protein transport protein Sec61 subunit alpha isoform 2 (476 aa).

Topologically, residues 1-33 (MGIKFLEVIKPFCAVLPEIQKPERKIQFREKVL) are cytoplasmic. Residues 34-53 (WTAITLFIFLVCCQIPLFGI) form a helical membrane-spanning segment. At 54–76 (MSSDSADPFYWMRVILASNRGTL) the chain is on the lumenal side. The chain crosses the membrane as a helical span at residues 77-96 (MELGISPIVTSGLIMQLLAG). Residues 97–117 (AKIIEVGDTPKDRALFNGAQK) are Cytoplasmic-facing. A helical transmembrane segment spans residues 118–138 (LFGMIITIGQAIVYVMTGMYG). Residues 139–144 (DPAEMG) lie on the Lumenal side of the membrane. Residues 145–165 (AGICLLIIIQLFVAGLIVLLL) traverse the membrane as a helical segment. At 166–172 (DELLQKG) the chain is on the cytoplasmic side. The helical transmembrane segment at 173–193 (YGLGSGISLFIATNICETIVW) threads the bilayer. The Lumenal segment spans residues 194–240 (KAFSPTTINTGRGTEFEGAVIALFHLLATRTDKVRALREAFYRQNLP). A helical transmembrane segment spans residues 241 to 261 (NLMNLIATVFVFAVVIYFQGF). At 262–288 (RVDLPIKSARYRGQYSSYPIKLFYTSN) the chain is on the cytoplasmic side. Residues 289–309 (IPIILQSALVSNLYVISQMLS) traverse the membrane as a helical segment. The Lumenal portion of the chain corresponds to 310–354 (VRFSGNFLVNLLGQWADVSGGGPARSYPVGGLCYYLSPPESMGAI). A helical transmembrane segment spans residues 355–375 (FEDPVHVVVYIIFMLGSCAFF). Residues 376 to 420 (SKTWIEVSGSSAKDVAKQLKEQQMVMRGHRDTSMVHELNRYIPTA) are Cytoplasmic-facing. The chain crosses the membrane as a helical span at residues 421–441 (AAFGGLCIGALSVLADFLGAI). Residues 442–445 (GSGT) are Lumenal-facing. The chain crosses the membrane as a helical span at residues 446 to 462 (GILLAVTIIYQYFEIFV). Residues 463-476 (KEQAEVGGMGALFF) are Cytoplasmic-facing.

The protein belongs to the SecY/SEC61-alpha family. The SEC61 channel-forming translocon complex consists of channel-forming core components SEC61A1, SEC61B and SEC61G and different auxiliary components such as SEC62 and SEC63.

It is found in the endoplasmic reticulum membrane. Functionally, component of SEC61 channel-forming translocon complex that mediates transport of signal peptide-containing precursor polypeptides across the endoplasmic reticulum (ER). Forms a ribosome receptor and a gated pore in the ER membrane, both functions required for cotranslational translocation of nascent polypeptides. This Homo sapiens (Human) protein is Protein transport protein Sec61 subunit alpha isoform 2 (SEC61A2).